Reading from the N-terminus, the 95-residue chain is Small ribosomal subunit protein bS6 (95 aa).

Belongs to the bacterial ribosomal protein bS6 family.

In terms of biological role, binds together with bS18 to 16S ribosomal RNA. This chain is Small ribosomal subunit protein bS6, found in Desulforamulus reducens (strain ATCC BAA-1160 / DSM 100696 / MI-1) (Desulfotomaculum reducens).